Consider the following 444-residue polypeptide: MKYTDFLAHPDEIIPTIRMMYADYRLKNMEIKDPSVRFCYNMLNRVSRSFAMVIQQLPVELRDATCVFYLILRALDTVEDDMAIPKEVKIPMLRTFHEHLSDRSWKIKCGYGPYVDLMDNYPLVTDVYLRFDEGTKAVIKDITRRMGNGMADFIDLDEVLTIPQYDLYCHYVAGLCGIGMCKLFVDSGLEKEDLVAEEDLANQMGLFLQKNNIVRDYLEDINELPAPRMFWPKEIWGNYAKQLDEFKDPKNLDKAMLCLNHMVTDALRHCEVGLRSLSLLHNPNILRAVLIPQVMGVRTLTLVYNNPEVFRGVVKMRRGETAKIFVTTTSKLSFFRTYLQFANEMEQKCLTEAKNDPMVALTLKRVQGVQAACRAAIVKAEIAEGAKGPSTAMVLAGALLIAALAYFAYVYSAGGTSLKALPLFGVVIILAIGLFGRNLALKTV.

Residues R48 and R73 each coordinate NADP(+). Mg(2+)-binding residues include D76, E79, and D80. NADP(+)-binding residues include R215, K315, and R317. 2 helical membrane-spanning segments follow: residues 391-411 (TAMV…AYVY) and 415-435 (GTSL…IGLF).

This sequence belongs to the phytoene/squalene synthase family. It depends on Mg(2+) as a cofactor.

It localises to the membrane. It carries out the reaction 2 (2E,6E)-farnesyl diphosphate + NADH + H(+) = squalene + 2 diphosphate + NAD(+). It catalyses the reaction 2 (2E,6E)-farnesyl diphosphate + NADPH + H(+) = squalene + 2 diphosphate + NADP(+). The catalysed reaction is 2 (2E,6E,10E)-geranylgeranyl diphosphate + NADPH + H(+) = all-trans-lycopaoctaene + 2 diphosphate + NADP(+). Converts the C20 geranylgeranyl diphosphate (GGPP) to the C40 lycopaoctaene, the first committed intermediate in the production of lycopadiene. Converts farnesyl diphosphate (FPP) into squalene, a precursor for sterol biosynthesis in eukaryotes. Converts with low efficiency the C20 phytyl diphosphate (PPP) to the C40 lycopadiene in vitro. This reaction may not have biological significance in vivo. This chain is Lycopaoctaene synthase, found in Botryococcus braunii (Green alga).